We begin with the raw amino-acid sequence, 2178 residues long: DNA-directed RNA polymerase subunit beta (2178 aa).

Insert stretches follow at residues 269–325 (SKKI…TPFV), 714–1508 (KRID…LFYN), and 1703–1900 (KGND…LQPM).

Belongs to the RNA polymerase beta chain family. In plastids the minimal PEP RNA polymerase catalytic core is composed of four subunits: alpha, beta, beta', and beta''. When a (nuclear-encoded) sigma factor is associated with the core the holoenzyme is formed, which can initiate transcription.

It is found in the plastid. Its subcellular location is the chloroplast. The catalysed reaction is RNA(n) + a ribonucleoside 5'-triphosphate = RNA(n+1) + diphosphate. Its function is as follows. DNA-dependent RNA polymerase catalyzes the transcription of DNA into RNA using the four ribonucleoside triphosphates as substrates. This Tupiella akineta (Green alga) protein is DNA-directed RNA polymerase subunit beta.